Here is a 2319-residue protein sequence, read N- to C-terminus: MAARAAAAAAAAAARARARAGSGERRAPPGPRPAPGARDLEAGARGAAAAAAAPGPMLGGGGDGGGGLNSVHHHPLLPRHELNMAHNAGAAAAAGTHSAKSGGSEAALKEGGSAAALSSSSSSSAAAAAASSSSSSGPGSAMETGLLPNHKLKTVGEAPAAPPHQQHHHHHHAHHHHHHAHHLHHHHALQQQLNQFQQQQQQQQQQQQQQQQQQHPISNNNSLGGAGGGAPQPGPDMEQPQHGGAKDSAAGGQADPPGPPLLSKPGDEDDAPPKMGEPAGGRYEHPGLGALGTQQPPVAVPGGGGGPAAVPEFNNYYGSAAPASGGPGGRAGPCFDQHGGQQSPGMGMMHSASAAAAGAPGSMDPLQNSHEGYPNSQCNHYPGYSRPGAGGGGGGGGGGGGGSGGGGGGGGAGAGGAGAGAVAAAAAAAAAAAGGGGGGGYGGSSAGYGVLSSPRQQGGGMMMGPGGGGAASLSKAAAGSAAGGFQRFAGQNQHPSGATPTLNQLLTSPSPMMRSYGGSYPEYSSPSAPPPPPSQPQSQAAAAGAAAGGQQAAAGMGLGKDMGAQYAAASPAWAAAQQRSHPAMSPGTPGPTMGRSQGSPMDPMVMKRPQLYGMGSNPHSQPQQSSPYPGGSYGPPGPQRYPIGIQGRTPGAMAGMQYPQQQMPPQYGQQGVSGYCQQGQQPYYSQQPQPPHLPPQAQYLPSQSQQRYQPQQDMSQEGYGTRSQPPLAPGKPNHEDLNLIQQERPSSLPDLSGSIDDLPTGTEATLSSAVSASGSTSSQGDQSNPAQSPFSPHASPHLSSIPGGPSPSPVGSPVGSNQSRSGPISPASIPGSQMPPQPPGSQSESSSHPALSQSPMPQERGFMAGTQRNPQMAQYGPQQTGPSMSPHPSPGGQMHAGISSFQQSNSSGTYGPQMSQYGPQGNYSRPPAYSGVPSASYSGPGPGMGISANNQMHGQGPSQPCGAVPLGRMPSAGMQNRPFPGNMSSMTPSSPGMSQQGGPGMGPPMPTVNRKAQEAAAAVMQAAANSAQSRQGSFPGMNQSGLMASSSPYSQPMNNSSSLMNTQAPPYSMAPAMVNSSAASVGLADMMSPGESKLPLPLKADGKEEGTPQPESKSKKSSSSTTTGEKITKVYELGNEPERKLWVDRYLTFMEERGSPVSSLPAVGKKPLDLFRLYVCVKEIGGLAQVNKNKKWRELATNLNVGTSSSAASSLKKQYIQYLFAFECKIERGEEPPPEVFSTGDTKKQPKLQPPSPANSGSLQGPQTPQSTGSNSMAEVPGDLKPPTPASTPHGQMTPMQGGRSSTISVHDPFSDVSDSSFPKRNSMTPNAPYQQGMSMPDVMGRMPYEPNKDPFGGMRKVPGSSEPFMTQGQMPNSSMQDMYNQSPSGAMSNLGMGQRQQFPYGASYDRRHEPYGQQYPGQGPPSGQPPYGGHQPGLYPQQPNYKRHMDGMYGPPAKRHEGDMYNMQYSSQQQEMYNQYGGSYSGPDRRPIQGQYPYPYSRERMQGPGQIQTHGIPPQMMGGPLQSSSSEGPQQNMWAARNDMPYPYQNRQGPGGPTQAPPYPGMNRTDDMMVPDQRINHESQWPSHVSQRQPYMSSSASMQPITRPPQPSYQTPPSLPNHISRAPSPASFQRSLENRMSPSKSPFLPSMKMQKVMPTVPTSQVTGPPPQPPPIRREITFPPGSVEASQPVLKQRRKITSKDIVTPEAWRVMMSLKSGLLAESTWALDTINILLYDDSTVATFNLSQLSGFLELLVEYFRKCLIDIFGILMEYEVGDPSQKALDHNAARKDDSQSLADDSGKEEEDAECIDDDEEDEEDEEEDSEKTESDEKSSIALTAPDAAADPKEKPKQASKFDKLPIKIVKKNNLFVVDRSDKLGRVQEFNSGLLHWQLGGGDTTEHIQTHFESKMEIPPRRRPPPPLSSAGRKKEQEGKGDSEEQQEKSIIATIDDVLSARPGALPEDANPGPQTESSKFPFGIQQAKSHRNIKLLEDEPRSRDETPLCTIAHWQDSLAKRCICVSNIVRSLSFVPGNDAEMSKHPGLVLILGKLILLHHEHPERKRAPQTYEKEEDEDKGVACSKDEWWWDCLEVLRDNTLVTLANISGQLDLSAYTESICLPILDGLLHWMVCPSAEAQDPFPTVGPNSVLSPQRLVLETLCKLSIQDNNVDLILATPPFSRQEKFYATLVRYVGDRKNPVCREMSMALLSNLAQGDALAARAIAVQKGSIGNLISFLEDGVTMAQYQQSQHNLMHMQPPPLEPPSVDMMCRAAKALLAMARVDENRSEFLLHEGRLLDISISAVLNSLVASVICDVLFQIGQL.

Low complexity-rich tracts occupy residues 1-21 (MAARAAAAAAAAAARARARAG) and 43-56 (GARGAAAAAAAPGP). Disordered regions lie at residues 1–74 (MAAR…VHHH), 155–306 (VGEA…GGGG), 321–414 (APAS…GAGA), 487–546 (RFAG…AGAA), 577–1062 (QQRS…LMNT), and 1085–1129 (DMMS…KITK). Residue alanine 2 is modified to N-acetylalanine. Residues 57–68 (MLGGGGDGGGGL) show a composition bias toward gly residues. The segment covering 165–188 (QQHHHHHHAHHHHHHAHHLHHHHA) has biased composition (basic residues). 2 stretches are compositionally biased toward low complexity: residues 189-215 (LQQQLNQFQQQQQQQQQQQQQQQQQQH) and 343-363 (SPGMGMMHSASAAAAGAPGSM). Polar residues predominate over residues 365–379 (PLQNSHEGYPNSQCN). Over residues 388-414 (GAGGGGGGGGGGGGGSGGGGGGGGAGA) the composition is skewed to gly residues. Arginine 487 bears the Asymmetric dimethylarginine mark. Residues 489 to 510 (AGQNQHPSGATPTLNQLLTSPS) are compositionally biased toward polar residues. An LXXLL motif is present at residues 502–506 (LNQLL). Residues 536–546 (PQSQAAAAGAA) show a composition bias toward low complexity. 2 positions are modified to phosphoserine: serine 585 and serine 599. Residue arginine 608 is modified to Asymmetric dimethylarginine. Residues 620 to 630 (SQPQQSSPYPG) are compositionally biased toward low complexity. At arginine 640 the chain carries Asymmetric dimethylarginine. Composition is skewed to low complexity over residues 651 to 670 (GAMAGMQYPQQQMPPQYGQQ), 677 to 687 (QQGQQPYYSQQ), 695 to 712 (PQAQYLPSQSQQRYQPQQ), 767 to 783 (SSAVSASGSTSSQGDQS), 811 to 832 (GSPVGSNQSRSGPISPASIPGS), and 840 to 849 (GSQSESSSHP). Residues 866-880 (TQRNPQMAQYGPQQT) show a composition bias toward polar residues. The segment covering 881–892 (GPSMSPHPSPGG) has biased composition (low complexity). Composition is skewed to polar residues over residues 899–923 (SSFQQSNSSGTYGPQMSQYGPQGNY) and 947–958 (SANNQMHGQGPS). Composition is skewed to low complexity over residues 980–994 (PGNMSSMTPSSPGMS) and 1014–1028 (EAAAAVMQAAANSAQ). The span at 1029 to 1062 (SRQGSFPGMNQSGLMASSSPYSQPMNNSSSLMNT) shows a compositional bias: polar residues. The 92-residue stretch at 1136 to 1227 (EPERKLWVDR…YLFAFECKIE (92 aa)) folds into the ARID domain. Disordered stretches follow at residues 1230-1334 (EEPP…QQGM), 1346-1443 (EPNK…PNYK), 1475-1647 (NQYG…FLPS), and 1782-1852 (DHNA…KQAS). 2 stretches are compositionally biased toward polar residues: residues 1254 to 1273 (ANSGSLQGPQTPQSTGSNSM) and 1287 to 1304 (STPHGQMTPMQGGRSSTI). Positions 1305 to 1319 (SVHDPFSDVSDSSFP) are enriched in low complexity. Polar residues-rich tracts occupy residues 1320–1334 (KRNSMTPNAPYQQGM) and 1364–1388 (PFMTQGQMPNSSMQDMYNQSPSGAM). Residues 1426 to 1440 (PPYGGHQPGLYPQQP) are compositionally biased toward low complexity. The Nuclear localization signal motif lies at 1441 to 1460 (NYKRHMDGMYGPPAKRHEGD). Composition is skewed to polar residues over residues 1522 to 1534 (LQSSSSEGPQQNM) and 1579 to 1601 (ESQWPSHVSQRQPYMSSSASMQP). Phosphoserine occurs at positions 1625, 1638, and 1642. Polar residues predominate over residues 1627-1641 (ASFQRSLENRMSPSK). The segment covering 1782–1791 (DHNAARKDDS) has biased composition (basic and acidic residues). Position 1798 is a phosphoserine (serine 1798). Residues 1799 to 1823 (GKEEEDAECIDDDEEDEEDEEEDSE) show a composition bias toward acidic residues. A compositionally biased stretch (basic and acidic residues) spans 1842 to 1852 (ADPKEKPKQAS). Lysine 1860 carries the N6-acetyllysine modification. Disordered stretches follow at residues 1904-1941 (FESKMEIPPRRRPPPPLSSAGRKKEQEGKGDSEEQQEK) and 1954-1973 (RPGALPEDANPGPQTESSKF). Residues 1925 to 1940 (RKKEQEGKGDSEEQQE) show a composition bias toward basic and acidic residues. Positions 2119 to 2123 (LDGLL) match the LXXLL motif.

Component of SWI/SNF chromatin remodeling complexes, in some of which it can be mutually exclusive with ARID1B/BAF250B. The canonical complex contains a catalytic subunit (either SMARCA4/BRG1/BAF190A or SMARCA2/BRM/BAF190B) and at least SMARCE1, ACTL6A/BAF53, SMARCC1/BAF155, SMARCC2/BAF170, and SMARCB1/SNF5/BAF47. Other subunits specific to each of the complexes may also be present permitting several possible combinations developmentally and tissue specific. Component of the BAF (SWI/SNF-A) complex, which includes at least actin (ACTB), ARID1A/BAF250A, ARID1B/BAF250B, SMARCA2/BRM, SMARCA4/BRG1/BAF190A, ACTL6A/BAF53, ACTL6B/BAF53B, SMARCE1/BAF57, SMARCC1/BAF155, SMARCC2/BAF170, SMARCB1/SNF5/INI1, and one or more SMARCD1/BAF60A, SMARCD2/BAF60B, or SMARCD3/BAF60C. In muscle cells, the BAF complex also contains DPF3. Component of neural progenitors-specific chromatin remodeling complex (npBAF complex) composed of at least, ARID1A/BAF250A or ARID1B/BAF250B, SMARCD1/BAF60A, SMARCD3/BAF60C, SMARCA2/BRM/BAF190B, SMARCA4/BRG1/BAF190A, SMARCB1/BAF47, SMARCC1/BAF155, SMARCE1/BAF57, SMARCC2/BAF170, PHF10/BAF45A, ACTL6A/BAF53A and actin. Component of neuron-specific chromatin remodeling complex (nBAF complex) composed of at least, ARID1A/BAF250A or ARID1B/BAF250B, SMARCD1/BAF60A, SMARCD3/BAF60C, SMARCA2/BRM/BAF190B, SMARCA4/BRG1/BAF190A, SMARCB1/BAF47, SMARCC1/BAF155, SMARCE1/BAF57, SMARCC2/BAF170, DPF1/BAF45B, DPF3/BAF45C, ACTL6B/BAF53B and actin. Component of a SWI/SNF-like EBAFb complex, at least composed of SMARCA4/BRG1/BAF190A, SMARCB1/BAF47/SNF5, ACTL6A/BAF53A, SMARCE1/BAF57, SMARCD1/BAF60A, SMARCD2/BAF60B, SMARCC1/BAF155, SMARCC2/BAF170, ARID1B/BAF250B, MLLT1/ENL and actin. Interacts through its C-terminus with SMARCA2/BRM/BAF190B and SMARCA4/BRG1/BAF190A. Interacts with SMARCC1/BAF155. As to expression, widely expressed with high levels in heart, skeletal muscle and kidney.

The protein resides in the nucleus. Its function is as follows. Involved in transcriptional activation and repression of select genes by chromatin remodeling (alteration of DNA-nucleosome topology). Component of SWI/SNF chromatin remodeling complexes that carry out key enzymatic activities, changing chromatin structure by altering DNA-histone contacts within a nucleosome in an ATP-dependent manner. Belongs to the neural progenitors-specific chromatin remodeling complex (npBAF complex) and the neuron-specific chromatin remodeling complex (nBAF complex). During neural development a switch from a stem/progenitor to a postmitotic chromatin remodeling mechanism occurs as neurons exit the cell cycle and become committed to their adult state. The transition from proliferating neural stem/progenitor cells to postmitotic neurons requires a switch in subunit composition of the npBAF and nBAF complexes. As neural progenitors exit mitosis and differentiate into neurons, npBAF complexes which contain ACTL6A/BAF53A and PHF10/BAF45A, are exchanged for homologous alternative ACTL6B/BAF53B and DPF1/BAF45B or DPF3/BAF45C subunits in neuron-specific complexes (nBAF). The npBAF complex is essential for the self-renewal/proliferative capacity of the multipotent neural stem cells. The nBAF complex along with CREST plays a role regulating the activity of genes essential for dendrite growth. Binds DNA non-specifically. This chain is AT-rich interactive domain-containing protein 1B, found in Homo sapiens (Human).